The chain runs to 525 residues: Arylsulfatase G (525 aa).

The N-terminal stretch at Met1–Ser16 is a signal peptide. 3 residues coordinate Ca(2+): Asp44, Asp45, and Cys84. Cys84 acts as the Nucleophile in catalysis. Position 84 is a 3-oxoalanine (Cys) (Cys84). An N-linked (GlcNAc...) asparagine glycan is attached at Asn117. Lys137 provides a ligand contact to substrate. Residue His139 is part of the active site. Position 162 (Ser162) interacts with substrate. N-linked (GlcNAc...) asparagine glycosylation occurs at Asn215. His251 is a binding site for substrate. Ca(2+) contacts are provided by Asp302 and Asn303. N-linked (GlcNAc...) asparagine glycans are attached at residues Asn356 and Asn497.

The protein belongs to the sulfatase family. The cofactor is Ca(2+). Post-translationally, N-glycosylated. N-glycosylated with both high mannose and complex type sugars. In terms of processing, the conversion to 3-oxoalanine (also known as C-formylglycine, FGly), of a serine or cysteine residue in prokaryotes and of a cysteine residue in eukaryotes, is critical for catalytic activity. The 63-kDa precursor undergoes proteolytic processing in two steps, yielding two fragments in the first step (apparent molecular masses of 44 and 18 kDa). In the second step, the 44-kDa fragment is processed further to the 34- and 10-kDa chains. The 10-kDa chain is a cleavage product of the 44-kDa fragment but linked to the 18-kDa chain through a disulfide bridge. As to expression, widely expressed, with very low expression in brain, lung, heart and skeletal muscle.

The protein localises to the lysosome. The enzyme catalyses an aryl sulfate + H2O = a phenol + sulfate + H(+). The catalysed reaction is Hydrolysis of the 3-sulfate groups of the N-sulfo-D-glucosamine 3-O-sulfate units of heparin.. Its activity is regulated as follows. Inhibited by phosphate. The phosphate forms a covalent bond with the active site 3-oxoalanine. Its function is as follows. Displays arylsulfatase activity at acidic pH towards artificial substrates, such as p-nitrocatechol sulfate and also, but with a lower activity towards p-nitrophenyl sulfate and 4-methylumbelliferyl sulfate. Catalyzes the hydrolysis of the 3-sulfate groups of the N-sulfo-D-glucosamine 3-O-sulfate units of heparin. The sequence is that of Arylsulfatase G (ARSG) from Homo sapiens (Human).